A 370-amino-acid polypeptide reads, in one-letter code: 1-propanol dehydrogenase PduQ (370 aa).

The protein belongs to the iron-containing alcohol dehydrogenase family. As to quaternary structure, interacts with PduP, probably via the N-terminus of PduQ. Fe cation serves as cofactor.

The protein resides in the bacterial microcompartment. It catalyses the reaction 1-propanol + NAD(+) = propanal + NADH + H(+). It functions in the pathway polyol metabolism; 1,2-propanediol degradation. In terms of biological role, an iron-dependent alcohol dehydrogenase required for optimal 1,2-propanediol (1,2-PD) degradation. NAD(+) and NADH are regenerated internally within the bacterial microcompartment (BMC) dedicated to 1,2-PD degradation by the PduP and PduQ enzymes, which reduce NAD(+) and oxidize NADH respectively, although there must also be cofactor transport across the BMC. Its function is as follows. Expression of a cosmid containing the full 21-gene pdu operon in E.coli allows E.coli to grow on 1,2-propanediol (1,2-PD) with the appearance of bacterial microcompartments (BMC) in its cytoplasm. Functionally, the 1,2-PD-specific bacterial microcompartment (BMC) concentrates low levels of 1,2-PD catabolic enzymes, concentrates volatile reaction intermediates thus enhancing pathway flux and keeps the level of toxic, mutagenic propionaldehyde low. The protein is 1-propanol dehydrogenase PduQ of Citrobacter freundii.